Here is a 341-residue protein sequence, read N- to C-terminus: Glyceraldehyde-3-phosphate dehydrogenase 2 (341 aa).

Residues 13–14 (RI), aspartate 35, and lysine 85 contribute to the NAD(+) site. Residues 157–159 (SCT), threonine 188, 217–218 (TG), and arginine 240 contribute to the D-glyceraldehyde 3-phosphate site. The active-site Nucleophile is cysteine 158. Asparagine 322 provides a ligand contact to NAD(+).

The protein belongs to the glyceraldehyde-3-phosphate dehydrogenase family. Homotetramer.

It is found in the cytoplasm. The catalysed reaction is D-glyceraldehyde 3-phosphate + phosphate + NAD(+) = (2R)-3-phospho-glyceroyl phosphate + NADH + H(+). Its pathway is carbohydrate degradation; glycolysis; pyruvate from D-glyceraldehyde 3-phosphate: step 1/5. This Caenorhabditis briggsae protein is Glyceraldehyde-3-phosphate dehydrogenase 2.